Consider the following 365-residue polypeptide: Sesquiterpene synthase 3 (365 aa).

Mg(2+) is bound by residues D117, N253, S257, and E261. The short motif at 117-121 is the DDXXD motif element; the sequence is DDWSD. The short motif at 253–261 is the NSE/DTE motif element; it reads NDILSYNRE. 2 residues coordinate (2E,6E)-farnesyl diphosphate: R341 and Y342.

This sequence belongs to the terpene synthase family. The cofactor is Mg(2+).

It carries out the reaction (2E,6E)-farnesyl diphosphate = delta-cadinene + diphosphate. Its function is as follows. Terpene cyclase that catalyzes the cyclization of farnesyl diphosphate (FPP) to various sesquiterpenes, including beta-elemene gamma-cadinene, delta-cadinene, and alpha-cadinene. The chain is Sesquiterpene synthase 3 from Postia placenta (strain ATCC 44394 / Madison 698-R) (Brown rot fungus).